Reading from the N-terminus, the 59-residue chain is Putative antitoxin AF_1090 (59 aa).

Belongs to the UPF0165 family.

Functionally, possibly the antitoxin component of a type II toxin-antitoxin (TA) system. This chain is Putative antitoxin AF_1090, found in Archaeoglobus fulgidus (strain ATCC 49558 / DSM 4304 / JCM 9628 / NBRC 100126 / VC-16).